The following is a 463-amino-acid chain: Argininosuccinate lyase (463 aa).

The protein belongs to the lyase 1 family. Argininosuccinate lyase subfamily.

The protein localises to the cytoplasm. The catalysed reaction is 2-(N(omega)-L-arginino)succinate = fumarate + L-arginine. The protein operates within amino-acid biosynthesis; L-arginine biosynthesis; L-arginine from L-ornithine and carbamoyl phosphate: step 3/3. The protein is Argininosuccinate lyase of Streptococcus pneumoniae (strain 70585).